A 326-amino-acid polypeptide reads, in one-letter code: MFNIQSDDLLHHFEADSNDTLLSAALRAELVFPYECNSGGCGACKIELLEGEVSNLWPDAPGLAARELRKNRFLACQCKPLSDLKIKVINRAEGRASHPPKRFSTRVVSKRFLSDEMFELRLEAEQKVVFSPGQYFMVDVPELGTRAYSAANPVDGNTLTLIVKAVPNGKVSCALANETIETLQLDGPYGLSVLKTADETQSVFIAGGSGIAPMVSMVNTLIAQGYEKPITVFYGSRLEAELEAAETLFGWKENLKLINVSSSVVGNSEKKYPTGYVHEIIPEYMEGLLGAEFYLCGPPQMINSVQKLLMIENKVPFEAIHFDRFF.

The region spanning 1–92 (MFNIQSDDLL…DLKIKVINRA (92 aa)) is the 2Fe-2S ferredoxin-type domain. Residues Cys-36, Cys-41, Cys-44, and Cys-76 each contribute to the [2Fe-2S] cluster site. Residues 95–326 (RASHPPKRFS…FEAIHFDRFF (232 aa)) form a ferredoxin-reductase region. One can recognise an FAD-binding FR-type domain in the interval 100-195 (PKRFSTRVVS…DGPYGLSVLK (96 aa)). FAD-binding positions include 146-149 (RAYS), 162-164 (IVK), and 170-172 (KVS).

This sequence belongs to the bacterial ring-hydroxylating dioxygenase ferredoxin reductase family. Monomer. The alkene monooxygenase multicomponent enzyme system is composed of an electron transfer component and a monooxygenase component interacting with the effector protein TmoD. The electron transfer component is composed of a ferredoxin reductase (TmoF) and a ferredoxin (TmoC), and the monooxygenase component is formed by a heterohexamer (dimer of heterotrimers) of two alpha subunits (TmoA), two beta subunits (TmoE) and two gamma subunits (TmoB). FAD is required as a cofactor. The cofactor is [2Fe-2S] cluster.

It carries out the reaction 2 reduced [2Fe-2S]-[ferredoxin] + NAD(+) + H(+) = 2 oxidized [2Fe-2S]-[ferredoxin] + NADH. Its pathway is xenobiotic degradation; toluene degradation. Functionally, reductase component of the toluene-4-monooxygenase multicomponent enzyme system which catalyzes the O2- and NADH-dependent hydroxylation of toluene to form p-cresol. Ferredoxin reductase catalyzes the transfer of electrons from NADH to ferredoxin (TmoC). This is Toluene-4-monooxygenase system, ferredoxin--NAD(+) reductase component from Ectopseudomonas mendocina (Pseudomonas mendocina).